The primary structure comprises 192 residues: Imidazoleglycerol-phosphate dehydratase (192 aa).

Belongs to the imidazoleglycerol-phosphate dehydratase family.

It localises to the cytoplasm. It catalyses the reaction D-erythro-1-(imidazol-4-yl)glycerol 3-phosphate = 3-(imidazol-4-yl)-2-oxopropyl phosphate + H2O. It participates in amino-acid biosynthesis; L-histidine biosynthesis; L-histidine from 5-phospho-alpha-D-ribose 1-diphosphate: step 6/9. The protein is Imidazoleglycerol-phosphate dehydratase of Methanocella arvoryzae (strain DSM 22066 / NBRC 105507 / MRE50).